We begin with the raw amino-acid sequence, 326 residues long: MGEAINLLINSKILAPLIMGFLFSIVLGPIFIPILHKLKFGQNIRKEGPKSHQKKSGTPTMGGLIFFIATATAILIMGQKPMSREMILLYSFLAFGFIGFLDDILKIIHKDNLGLRAAQKMILLVLFSVALAWYGYTNVGTDILIPFINQNFRLNLGILYIPFIVVYYAAVTNAVNLTDGIDGLATSVTVIVLTFFAIIGFRTQNVEVAVFAIALAGALLGFLKFNAFPAKIFMGDTGSLALGGVIGTIALMLKMELFVIIVGGIYLIETLSVIIQVTSFKLTGKRVFRMSPIHHHFEQVGWSEVKIVTIFSSITAILCIIGFVAL.

10 consecutive transmembrane segments (helical) span residues 13–33 (ILAP…IFIP), 57–77 (GTPT…ILIM), 85–105 (EMIL…DDIL), 121–141 (MILL…NVGT), 155–175 (NLGI…TNAV), 181–201 (IDGL…IIGF), 208–228 (VAVF…FNAF), 232–252 (IFMG…IALM), 257–277 (LFVI…IIQV), and 305–325 (VKIV…GFVA).

It belongs to the glycosyltransferase 4 family. MraY subfamily. Requires Mg(2+) as cofactor.

It is found in the cell membrane. The enzyme catalyses UDP-N-acetyl-alpha-D-muramoyl-L-alanyl-gamma-D-glutamyl-meso-2,6-diaminopimeloyl-D-alanyl-D-alanine + di-trans,octa-cis-undecaprenyl phosphate = di-trans,octa-cis-undecaprenyl diphospho-N-acetyl-alpha-D-muramoyl-L-alanyl-D-glutamyl-meso-2,6-diaminopimeloyl-D-alanyl-D-alanine + UMP. It participates in cell wall biogenesis; peptidoglycan biosynthesis. Catalyzes the initial step of the lipid cycle reactions in the biosynthesis of the cell wall peptidoglycan: transfers peptidoglycan precursor phospho-MurNAc-pentapeptide from UDP-MurNAc-pentapeptide onto the lipid carrier undecaprenyl phosphate, yielding undecaprenyl-pyrophosphoryl-MurNAc-pentapeptide, known as lipid I. This chain is Phospho-N-acetylmuramoyl-pentapeptide-transferase, found in Clostridium beijerinckii (strain ATCC 51743 / NCIMB 8052) (Clostridium acetobutylicum).